The sequence spans 641 residues: Uromodulin (641 aa).

Residues 1 to 24 (MGQPPLTWMLMVVVASWFITTAAT) form the signal peptide. Residue N25 is glycosylated (N-linked (GlcNAc...) asparagine). Positions 28-64 (EARWCSECHSNATCTEDEAVTTCTCQEGFTGDGLTCV) constitute an EGF-like 1 domain. 21 disulfides stabilise this stretch: C32-C41, C35-C50, C52-C63, C69-C83, C77-C92, C94-C106, C112-C126, C120-C135, C137-C148, C150-C161, C155-C170, C174-C267, C195-C282, C217-C255, C223-C287, C248-C256, C297-C306, C300-C315, C317-C347, C335-C425, and C366-C389. Residues 65-107 (DLDECAIPGAHNCSANSSCVNTPGSFSCVCPEGFRLSPGLGCT) form the EGF-like 2; calcium-binding domain. N76 is a glycosylation site (N-linked (GlcNAc...) asparagine). The 42-residue stretch at 108–149 (DVDECAEPGLSHCHALATCVNVVGNYLCVCPAGYRGDGWHCE) folds into the EGF-like 3; calcium-binding domain. A beta hairpin region spans residues 150–171 (CSPGSCGPGLDCVPEGDALVCA). The interval 172-291 (DPCQAHRTLD…CHLAYCTDPS (120 aa)) is D10C. N-linked (GlcNAc...) asparagine glycosylation occurs at N232. N-linked (GlcNAc...) asparagine glycosylation occurs at N275. Residues 292 to 323 (SVEGTCEECSIDEDCKSDNGRWHCQCKQDFNI) enclose the EGF-like 4 domain. N322 carries N-linked (GlcNAc...) asparagine glycosylation. The interval 334–429 (ECGANDMKVS…KINFACSYPL (96 aa)) is ZP-N. The region spanning 334-589 (ECGANDMKVS…PTCSGTRFRS (256 aa)) is the ZP domain. The flexible ZP-N/ZP-C linker; important for secretion and polymerization into filaments stretch occupies residues 430–453 (DMKVSLKTSLQPVVSALNITVGGT). N447 is a glycosylation site (N-linked (GlcNAc...) asparagine). Residues 454 to 464 (GMFTVRMALFQ) form an internal hydrophobic patch (IHP) region. The segment at 454–589 (GMFTVRMALF…PTCSGTRFRS (136 aa)) is ZP-C. Cystine bridges form between C506–C566, C527–C582, and C571–C578. Positions 586 to 589 (RFRS) are essential for cleavage by HPN. The external hydrophobic patch (EHP); regulates polymerization into filaments stretch occupies residues 598 to 606 (VLNLGPITR). S614 carries GPI-anchor amidated serine lipidation. Residues 615–641 (RAAFSSLGLLKVWLPLLLSATLTLTFQ) constitute a propeptide, removed in mature form.

As to quaternary structure, homodimer that then polymerizes into long filaments. The filaments can additionally assemble laterally to form a sheet. The filaments consist of a zigzag-shaped backbone with laterally protruding arms which interact with bacterial adhesin fimH. Two fimH molecules can bind to a single UMOD monomer. In terms of processing, N-glycosylated. Post-translationally, proteolytically cleaved at a conserved C-terminal proteolytic cleavage site to generate the secreted form found in urine. This cleavage is catalyzed by HPN.

The protein localises to the apical cell membrane. The protein resides in the basolateral cell membrane. Its subcellular location is the cell projection. It is found in the cilium membrane. It localises to the secreted. Functionally, functions in biogenesis and organization of the apical membrane of epithelial cells of the thick ascending limb of Henle's loop (TALH), where it promotes formation of complex filamentous gel-like structure that may play a role in the water barrier permeability. May serve as a receptor for binding and endocytosis of cytokines (IL-1, IL-2) and TNF. Facilitates neutrophil migration across renal epithelia. In the urine, may contribute to colloid osmotic pressure, retards passage of positively charged electrolytes, and inhibits formation of liquid containing supersaturated salts and subsequent formation of salt crystals. Protects against urinary tract infections by binding to type 1 fimbriated E.coli. Binds to bacterial adhesin fimH which mediates the stable formation of bacterial aggregates, prevents the binding of E.coli to uroplakins UPK1A and UPK1B which act as urothelial receptors for type I fimbriae, and allows for pathogen clearance through micturation. Also promotes aggregation of other bacteria including K.pneumoniae, P.aeruginosa and S.mitis and so may also protect against other uropathogens. The protein is Uromodulin (UMOD) of Pongo abelii (Sumatran orangutan).